The following is a 122-amino-acid chain: Replication termination protein (122 aa).

As to quaternary structure, homodimer.

In terms of biological role, plays a role in DNA replication and termination (fork arrest mechanism). Two dimers of rtp bind to the two inverted repeat regions (IRI and IRII) present in the termination site. The binding of each dimer is centered on an 8 bp direct repeat. This Bacillus spizizenii (strain ATCC 23059 / NRRL B-14472 / W23) (Bacillus subtilis subsp. spizizenii) protein is Replication termination protein (rtp).